The following is a 173-amino-acid chain: Urease accessory protein UreE (173 aa).

The disordered stretch occupies residues 136–173; that stretch reads PEGGAYAGSGQDHHDHSHGEHTQGEHTHDEAAEPHHHG. The segment covering 146 to 173 has biased composition (basic and acidic residues); the sequence is QDHHDHSHGEHTQGEHTHDEAAEPHHHG.

It belongs to the UreE family.

The protein localises to the cytoplasm. Functionally, involved in urease metallocenter assembly. Binds nickel. Probably functions as a nickel donor during metallocenter assembly. The chain is Urease accessory protein UreE from Beijerinckia indica subsp. indica (strain ATCC 9039 / DSM 1715 / NCIMB 8712).